Here is a 117-residue protein sequence, read N- to C-terminus: Protein OPG035 (117 aa).

This sequence belongs to the poxviridae OPG035 family.

In terms of biological role, bcl-2-like protein which contributes to virulence by preventing host NF-kappa-B activation in response to pro-inflammatory stimuli such as TNF-alpha or IL1B. The protein is Protein OPG035 (OPG035) of Bos taurus (Bovine).